The following is a 349-amino-acid chain: UDP-3-O-acylglucosamine N-acyltransferase 1 (349 aa).

Histidine 241 (proton acceptor) is an active-site residue.

Belongs to the transferase hexapeptide repeat family. LpxD subfamily. Homotrimer.

It carries out the reaction a UDP-3-O-[(3R)-3-hydroxyacyl]-alpha-D-glucosamine + a (3R)-hydroxyacyl-[ACP] = a UDP-2-N,3-O-bis[(3R)-3-hydroxyacyl]-alpha-D-glucosamine + holo-[ACP] + H(+). Its pathway is bacterial outer membrane biogenesis; LPS lipid A biosynthesis. Its function is as follows. Catalyzes the N-acylation of UDP-3-O-acylglucosamine using 3-hydroxyacyl-ACP as the acyl donor. Is involved in the biosynthesis of lipid A, a phosphorylated glycolipid that anchors the lipopolysaccharide to the outer membrane of the cell. This Gloeobacter violaceus (strain ATCC 29082 / PCC 7421) protein is UDP-3-O-acylglucosamine N-acyltransferase 1.